Consider the following 436-residue polypeptide: Protein Z-dependent protease inhibitor (436 aa).

The signal sequence occupies residues 1–20 (MRVVSSLFLPVLLAEVWLVS). N23, N42, and N69 each carry an N-linked (GlcNAc...) asparagine glycan. The tract at residues 128-145 (AGPLILPALFKRVKETFS) is heparin-binding. N-linked (GlcNAc...) asparagine glycosylation is found at N172, N189, and N287.

It belongs to the serpin family. Post-translationally, phosphorylated by FAM20C in the extracellular medium. Expressed by the liver and secreted in plasma.

Its subcellular location is the secreted. Functionally, inhibits activity of the coagulation protease factor Xa in the presence of PROZ, calcium and phospholipids. Also inhibits factor XIa in the absence of cofactors. This Rattus norvegicus (Rat) protein is Protein Z-dependent protease inhibitor (Serpina10).